The primary structure comprises 49 residues: Small, acid-soluble spore protein O (49 aa).

The segment at 1-49 (MVKRKANHVIPGMNDASAQGKGAGYNEELSNEPLTEAQKQNNKKRKKNQ) is disordered.

The protein belongs to the SspO family.

It localises to the spore core. The chain is Small, acid-soluble spore protein O from Anoxybacillus flavithermus (strain DSM 21510 / WK1).